Here is a 469-residue protein sequence, read N- to C-terminus: MSAGRTFEGAGCVTWWGFGPARDLLNSDTHKVRLQEELNVLLVGSGDPRHILKTITGLTHSDTLHVWVIENSMEVIARQLLLLYISLLPPDKMSVHKKTEVFLEVFGNLEIRKETEESVKKAAAQLSISITYSLSSDSLSHSCLDTSLLKFKERDELVRIFKLWERPPSAPASVSKVWDARVRQHLGSRYDSRQGAFDWDLNMKLHQRGCGVINKHQYAKWRETGVTFEMREGLYQTANQSLLSTRVFNHRGNGVALRGYWGDIVSSPYLSFGIETENKELLKTQNNHYVKTAQDISEVNLLELFECLAARGRSPLNEDPPNTSSSCCQSTESRKTEENSQSDPSASQTQPVEHSPTQELDLLNVNGVKVSFLSPDSLSKLPLKSKYRNLFNTIFCSASMVHQLDSALREIAAPDAALVIELATFLLDLSKEQVSGFAVKVKEIAEESGFTPAHDQNSDKYAVFTQKNN.

The tract at residues 313-356 is disordered; sequence RSPLNEDPPNTSSSCCQSTESRKTEENSQSDPSASQTQPVEHSP. Polar residues-rich tracts occupy residues 320–331 and 339–356; these read PPNTSSSCCQST and NSQS…EHSP.

The protein belongs to the DNAAF3 family. As to expression, mainly expressed in cell types that express axonemal dyneins.

Its subcellular location is the cytoplasm. The protein resides in the dynein axonemal particle. Required for the assembly of axonemal inner and outer dynein arms. Involved in preassembly of dyneins into complexes before their transport into cilia. The polypeptide is Dynein axonemal assembly factor 3 (dnaaf3) (Danio rerio (Zebrafish)).